We begin with the raw amino-acid sequence, 311 residues long: MKVAVLGAAGGIGQALALLLKTQLPAGSKLSLYDIAPVTPGVAVDLSHIPTAVEIKGFAGEDPTPALEGADVVLISAGVARKPGMDRSDLFNINAGIVRNLIEKVAVTCPKALVGIITNPVNTTVAIAAEVLKKAGVYDKNRLFGVTTLDVIRSETFIAELKGLNVADVKVNVIGGHSGVTILPLLSQVEGVTFSDEEVASLTKRIQNAGTEVVEAKAGGGSATLSMGQAACRFGMSLVRGLQGEANIVECAYVDGGSEHAEFFAQPVLLGKNGIEKVLPYGEVSAFEANARDSMLDTLKGDIKLGVDFVK.

Residues 7-13 (GAAGGIG) and Asp-34 contribute to the NAD(+) site. Substrate contacts are provided by Arg-81 and Arg-87. NAD(+) is bound by residues Asn-94 and 117–119 (ITN). Substrate contacts are provided by Asn-119 and Arg-153. Catalysis depends on His-177, which acts as the Proton acceptor. Met-227 is an NAD(+) binding site.

The protein belongs to the LDH/MDH superfamily. MDH type 1 family. As to quaternary structure, homodimer.

It catalyses the reaction (S)-malate + NAD(+) = oxaloacetate + NADH + H(+). In terms of biological role, catalyzes the reversible oxidation of malate to oxaloacetate. In Shewanella sp. (strain ANA-3), this protein is Malate dehydrogenase.